The following is a 120-amino-acid chain: Large ribosomal subunit protein uL18 (120 aa).

It belongs to the universal ribosomal protein uL18 family. In terms of assembly, part of the 50S ribosomal subunit; part of the 5S rRNA/L5/L18/L25 subcomplex. Contacts the 5S and 23S rRNAs.

Its function is as follows. This is one of the proteins that bind and probably mediate the attachment of the 5S RNA into the large ribosomal subunit, where it forms part of the central protuberance. This chain is Large ribosomal subunit protein uL18, found in Gluconacetobacter diazotrophicus (strain ATCC 49037 / DSM 5601 / CCUG 37298 / CIP 103539 / LMG 7603 / PAl5).